The following is a 308-amino-acid chain: Protein translocase subunit SecF (308 aa).

Transmembrane regions (helical) follow at residues 10-30 (LFFAISLAMIIPGLIVMAIFG), 129-149 (LAVSIAALAVIIYITWAFRGV), 160-180 (IIAMIHDVLVVISLVSIGGVL), 181-201 (FGWQVDALFLTALLSVIGFSV), 241-261 (TQLMTVEYMLLAIALFGGITL), and 264-284 (FAIILLVGLFMGTYSSIFIAA).

This sequence belongs to the SecD/SecF family. SecF subfamily. Forms a complex with SecD. Part of the essential Sec protein translocation apparatus which comprises SecA, SecYEG and auxiliary proteins SecDF. Other proteins may also be involved.

The protein resides in the cell membrane. Its function is as follows. Part of the Sec protein translocase complex. Interacts with the SecYEG preprotein conducting channel. SecDF uses the proton motive force (PMF) to complete protein translocation after the ATP-dependent function of SecA. The sequence is that of Protein translocase subunit SecF from Anaerolinea thermophila (strain DSM 14523 / JCM 11388 / NBRC 100420 / UNI-1).